Here is a 337-residue protein sequence, read N- to C-terminus: MNTEATHDQNEALTTGARLRNAREQLGLSQQAVAERLCLKVSTVRDIEEDKAPADLASTFLRGYIRSYARLVHIPEEELLPGLEKQAPLRAAKVAPMQSFSLGKRRKKRDGWLMTFTWLVLFVVIGLSGAWWWQDHKAQQEEITTMADQSSAELSSNSEQGQSVPLNTSTTTDPATTSTPPASVDTTATNTQTPAVTAPAPAVDPQQNAVVSPSQANVDTAATPAPTAATTPDGAAPLPTDQAGVTTPVADPNALVMNFTADCWLEVTDATGKKLFSGMQRKDGNLNLTGQAPYKLKIGAPAAVQIQYQGKPVDLSRFIRTNQVARLTLNAEQSPAQ.

Residues 1 to 111 (MNTEATHDQN…LGKRRKKRDG (111 aa)) lie on the Cytoplasmic side of the membrane. The HTH cro/C1-type domain maps to 19–71 (LRNAREQLGLSQQAVAERLCLKVSTVRDIEEDKAPADLASTFLRGYIRSYARL). A DNA-binding region (H-T-H motif) is located at residues 30 to 49 (QQAVAERLCLKVSTVRDIEE). Residues 112–132 (WLMTFTWLVLFVVIGLSGAWW) traverse the membrane as a helical; Signal-anchor for type II membrane protein segment. Residues 133 to 337 (WQDHKAQQEE…TLNAEQSPAQ (205 aa)) are Periplasmic-facing. A compositionally biased stretch (polar residues) spans 145–167 (TMADQSSAELSSNSEQGQSVPLN). Residues 145–236 (TMADQSSAEL…TAATTPDGAA (92 aa)) are disordered. Positions 168 to 207 (TSTTTDPATTSTPPASVDTTATNTQTPAVTAPAPAVDPQQ) are enriched in low complexity. Positions 208 to 218 (NAVVSPSQANV) are enriched in polar residues. The segment covering 219 to 236 (DTAATPAPTAATTPDGAA) has biased composition (low complexity).

It belongs to the RodZ family.

It is found in the cell inner membrane. Functionally, cytoskeletal protein that is involved in cell-shape control through regulation of the length of the long axis. The polypeptide is Cytoskeleton protein RodZ (Escherichia coli O9:H4 (strain HS)).